A 439-amino-acid polypeptide reads, in one-letter code: Adenylosuccinate synthetase (439 aa).

GTP contacts are provided by residues 25–31, 53–55, and K62; these read GDEGKGK and GHT. D26 acts as the Proton acceptor in catalysis. Residues D26 and G53 each coordinate Mg(2+). IMP contacts are provided by residues 26–29 and 51–54; these read DEGK and NAGH. H54 serves as the catalytic Proton donor. IMP-binding residues include T141, R155, N232, and T247. T307 contributes to the GTP binding site. 307-313 provides a ligand contact to substrate; that stretch reads TTTKRPR. R311 contacts IMP. GTP-binding positions include R313, 339-341, and 425-427; these read KLD and GVG.

The protein belongs to the adenylosuccinate synthetase family. In terms of assembly, homodimer. The cofactor is Mg(2+).

Its subcellular location is the cytoplasm. It carries out the reaction IMP + L-aspartate + GTP = N(6)-(1,2-dicarboxyethyl)-AMP + GDP + phosphate + 2 H(+). The protein operates within purine metabolism; AMP biosynthesis via de novo pathway; AMP from IMP: step 1/2. Plays an important role in the salvage pathway for purine nucleotide biosynthesis. Catalyzes the first commited step in the biosynthesis of AMP from IMP. The protein is Adenylosuccinate synthetase (ADSS) of Plasmodium berghei (strain Anka).